The sequence spans 684 residues: Threonine--tRNA ligase (684 aa).

The TGS domain occupies 1 to 66 (MTVPATDSWP…DTDAEVVPVA (66 aa)). A catalytic region spans residues 261–567 (DHRKLGSELD…LTEHYAGAFP (307 aa)). Zn(2+)-binding residues include C366, H417, and H544.

This sequence belongs to the class-II aminoacyl-tRNA synthetase family. As to quaternary structure, homodimer. Requires Zn(2+) as cofactor.

The protein resides in the cytoplasm. The enzyme catalyses tRNA(Thr) + L-threonine + ATP = L-threonyl-tRNA(Thr) + AMP + diphosphate + H(+). Its function is as follows. Catalyzes the attachment of threonine to tRNA(Thr) in a two-step reaction: L-threonine is first activated by ATP to form Thr-AMP and then transferred to the acceptor end of tRNA(Thr). Also edits incorrectly charged L-seryl-tRNA(Thr). The sequence is that of Threonine--tRNA ligase from Mycobacterium avium (strain 104).